The following is a 364-amino-acid chain: Mannose-1-phosphate guanyltransferase (364 aa).

The protein belongs to the transferase hexapeptide repeat family.

It localises to the cytoplasm. It catalyses the reaction alpha-D-mannose 1-phosphate + GTP + H(+) = GDP-alpha-D-mannose + diphosphate. Its pathway is nucleotide-sugar biosynthesis; GDP-alpha-D-mannose biosynthesis; GDP-alpha-D-mannose from alpha-D-mannose 1-phosphate (GTP route): step 1/1. In terms of biological role, involved in cell wall synthesis where it is required for glycosylation. Involved in cell cycle progression through cell-size checkpoint. In Hypocrea jecorina (Trichoderma reesei), this protein is Mannose-1-phosphate guanyltransferase (mpg1).